The sequence spans 545 residues: CTP synthase (545 aa).

The tract at residues 1–266 (MKTKFIFITG…DQKIAIMLKL (266 aa)) is amidoligase domain. Ser-14 contacts CTP. Ser-14 is a UTP binding site. ATP contacts are provided by residues 15 to 20 (SLGKGL) and Asp-72. Residues Asp-72 and Glu-140 each contribute to the Mg(2+) site. CTP is bound by residues 147–149 (DIE), 187–192 (KTKPTQ), and Lys-223. UTP is bound by residues 187-192 (KTKPTQ) and Lys-223. The 255-residue stretch at 291-545 (TIGIVGKYVD…IKASCENKNK (255 aa)) folds into the Glutamine amidotransferase type-1 domain. Residue Gly-353 coordinates L-glutamine. Cys-380 serves as the catalytic Nucleophile; for glutamine hydrolysis. Residues 381 to 384 (LGMQ), Glu-404, and Arg-472 each bind L-glutamine. Active-site residues include His-518 and Glu-520.

The protein belongs to the CTP synthase family. Homotetramer.

The enzyme catalyses UTP + L-glutamine + ATP + H2O = CTP + L-glutamate + ADP + phosphate + 2 H(+). It catalyses the reaction L-glutamine + H2O = L-glutamate + NH4(+). It carries out the reaction UTP + NH4(+) + ATP = CTP + ADP + phosphate + 2 H(+). It participates in pyrimidine metabolism; CTP biosynthesis via de novo pathway; CTP from UDP: step 2/2. With respect to regulation, allosterically activated by GTP, when glutamine is the substrate; GTP has no effect on the reaction when ammonia is the substrate. The allosteric effector GTP functions by stabilizing the protein conformation that binds the tetrahedral intermediate(s) formed during glutamine hydrolysis. Inhibited by the product CTP, via allosteric rather than competitive inhibition. Its function is as follows. Catalyzes the ATP-dependent amination of UTP to CTP with either L-glutamine or ammonia as the source of nitrogen. Regulates intracellular CTP levels through interactions with the four ribonucleotide triphosphates. This is CTP synthase from Maridesulfovibrio salexigens (strain ATCC 14822 / DSM 2638 / NCIMB 8403 / VKM B-1763) (Desulfovibrio salexigens).